Consider the following 389-residue polypeptide: Sulfate adenylyltransferase (389 aa).

The protein belongs to the sulfate adenylyltransferase family.

It carries out the reaction sulfate + ATP + H(+) = adenosine 5'-phosphosulfate + diphosphate. The protein operates within sulfur metabolism; hydrogen sulfide biosynthesis; sulfite from sulfate: step 1/3. The protein is Sulfate adenylyltransferase of Deinococcus deserti (strain DSM 17065 / CIP 109153 / LMG 22923 / VCD115).